The chain runs to 227 residues: Flagellar L-ring protein (227 aa).

The N-terminal stretch at 1-15 (MRTWAVLPILLMLVG) is a signal peptide. A lipid anchor (N-palmitoyl cysteine) is attached at Cys-16. Cys-16 carries S-diacylglycerol cysteine lipidation.

Belongs to the FlgH family. In terms of assembly, the basal body constitutes a major portion of the flagellar organelle and consists of four rings (L,P,S, and M) mounted on a central rod.

It localises to the cell outer membrane. It is found in the bacterial flagellum basal body. Assembles around the rod to form the L-ring and probably protects the motor/basal body from shearing forces during rotation. The chain is Flagellar L-ring protein from Syntrophotalea carbinolica (strain DSM 2380 / NBRC 103641 / GraBd1) (Pelobacter carbinolicus).